A 586-amino-acid polypeptide reads, in one-letter code: MEGANCSLKVNRHLLDPKFESYKLSLDPLPCYNVELDAAVAEVTLRDDQYTLDHMRAFGMYNYLHCNPWLPNSVFYIDQLKRVMSFTVTLDTAMGKPIEVFRFPRDLNACDNRLCSSMHFASAQWVTLSDGTGTLYIIRIGNQSDSLSGKWEIMFNQELGEPFIVVHSISSVRDELHVIDVLLLSVEKDESDIEGSGFHVCLEWVSAARAQNQENGEYEILKRRKLFGKSVPHYAAIEPLGNGVMMISYKPFRFIANEKDPHEPSEDEKMDEDNKREPLYNWQQTGEEVTLTFLLPEGKTKEDLNIKFLPGEIDISIKDQGTFLKGQLYSDVDCESSAWIMKEGRGVEVTLTKREPGCTWAELVIADKQGEYIADPAQTAAIAEKLMHLTSEDINPNPESEKPPCNAQELEECDIFLEDSTNLCRFDGTHLKATHVVNLGSNPYLFTFVATPELMPCFALRHDVDALLWQPVSEQPDNLWEHIATFNALGYVQASKQDKKFFTCAPNFSYSALCECVRRIFIYRQPTPVSTELYNRKEGRRVGQVAKQQVASLETTDPILGFQASNERLFVLTTKTLSVIKVNSTA.

One can recognise a CS domain in the interval 275-364 (KREPLYNWQQ…EPGCTWAELV (90 aa)).

The protein localises to the cytoplasm. It localises to the nucleus. In Xenopus laevis (African clawed frog), this protein is NudC domain-containing protein 1.